Here is a 101-residue protein sequence, read N- to C-terminus: Small ribosomal subunit protein uS14 (101 aa).

Belongs to the universal ribosomal protein uS14 family. In terms of assembly, part of the 30S ribosomal subunit. Contacts proteins S3 and S10.

Its function is as follows. Binds 16S rRNA, required for the assembly of 30S particles and may also be responsible for determining the conformation of the 16S rRNA at the A site. The chain is Small ribosomal subunit protein uS14 from Blochmanniella pennsylvanica (strain BPEN).